Consider the following 1172-residue polypeptide: Putative cadmium/zinc-transporting ATPase HMA4 (1172 aa).

Topologically, residues 1-93 (MALQNKEEEK…VRVNGETSFK (93 aa)) are cytoplasmic. One can recognise an HMA domain in the interval 17-83 (QKSYFDVLGI…ALNEARLEAN (67 aa)). The chain crosses the membrane as a helical span at residues 94–115 (NKWPSPFAVVSGLLLLLSFLKF). Topologically, residues 116–118 (VYS) are extracellular. A helical transmembrane segment spans residues 119-138 (PLRWLAVAAVAAGIYPILAK). The Cytoplasmic segment spans residues 139–145 (AFASIKR). A helical membrane pass occupies residues 146–166 (PRIDINILVIITVIATLAMQD). Position 167 (phenylalanine 167) is a topological domain, extracellular. Residues 168–188 (MEAAAVVFLFTISDWLETRAS) traverse the membrane as a helical segment. Residues 189–314 (YKATSVMQSL…KTKSQRLIDK (126 aa)) are Cytoplasmic-facing. Residues 315–337 (CSQYYTPAIILVSACVAIVPVIM) form a helical membrane-spanning segment. Residues 338-345 (KVHNLKHW) lie on the Extracellular side of the membrane. The helical transmembrane segment at 346–363 (FHLALVVLVSGCPCGLIL) threads the bilayer. At 364 to 656 (STPVATFCAL…KLARRARRKV (293 aa)) the chain is on the cytoplasmic side. The active-site 4-aspartylphosphate intermediate is aspartate 401. Mg(2+) is bound by residues aspartate 601 and aspartate 605. Residues 657–676 (VENVCLSIILKAGILALAFA) form a helical membrane-spanning segment. Topologically, residues 677–680 (GHPL) are extracellular. Residues 681 to 700 (IWAAVLVDVGTCLLVIFNSM) traverse the membrane as a helical segment. Residues 701–1172 (LLLREKKKIG…HHHHHHHVSA (472 aa)) are Cytoplasmic-facing.

This sequence belongs to the cation transport ATPase (P-type) (TC 3.A.3) family. Type IB subfamily.

It localises to the membrane. It catalyses the reaction Zn(2+)(in) + ATP + H2O = Zn(2+)(out) + ADP + phosphate + H(+). The catalysed reaction is Cd(2+)(in) + ATP + H2O = Cd(2+)(out) + ADP + phosphate + H(+). Involved in cadmium/zinc transport. This chain is Putative cadmium/zinc-transporting ATPase HMA4 (HMA4), found in Arabidopsis thaliana (Mouse-ear cress).